We begin with the raw amino-acid sequence, 265 residues long: 3-deoxy-manno-octulosonate cytidylyltransferase (265 aa).

Belongs to the KdsB family.

The protein resides in the cytoplasm. It catalyses the reaction 3-deoxy-alpha-D-manno-oct-2-ulosonate + CTP = CMP-3-deoxy-beta-D-manno-octulosonate + diphosphate. It functions in the pathway nucleotide-sugar biosynthesis; CMP-3-deoxy-D-manno-octulosonate biosynthesis; CMP-3-deoxy-D-manno-octulosonate from 3-deoxy-D-manno-octulosonate and CTP: step 1/1. It participates in bacterial outer membrane biogenesis; lipopolysaccharide biosynthesis. Activates KDO (a required 8-carbon sugar) for incorporation into bacterial lipopolysaccharide in Gram-negative bacteria. This chain is 3-deoxy-manno-octulosonate cytidylyltransferase, found in Delftia acidovorans (strain DSM 14801 / SPH-1).